The chain runs to 270 residues: Putative pyruvate, phosphate dikinase regulatory protein (270 aa).

Residue 149 to 156 (GVSRTSKT) participates in ADP binding.

It belongs to the pyruvate, phosphate/water dikinase regulatory protein family. PDRP subfamily.

The enzyme catalyses N(tele)-phospho-L-histidyl/L-threonyl-[pyruvate, phosphate dikinase] + ADP = N(tele)-phospho-L-histidyl/O-phospho-L-threonyl-[pyruvate, phosphate dikinase] + AMP + H(+). It carries out the reaction N(tele)-phospho-L-histidyl/O-phospho-L-threonyl-[pyruvate, phosphate dikinase] + phosphate + H(+) = N(tele)-phospho-L-histidyl/L-threonyl-[pyruvate, phosphate dikinase] + diphosphate. Functionally, bifunctional serine/threonine kinase and phosphorylase involved in the regulation of the pyruvate, phosphate dikinase (PPDK) by catalyzing its phosphorylation/dephosphorylation. The protein is Putative pyruvate, phosphate dikinase regulatory protein of Thermoanaerobacter pseudethanolicus (strain ATCC 33223 / 39E) (Clostridium thermohydrosulfuricum).